A 527-amino-acid chain; its full sequence is Phosphoethanolamine transferase OpgE (527 aa).

Over 1–33 the chain is Periplasmic; sequence MNLTLKESLVTRSRVFSPWTAFYFLQSLLINLG. The helical transmembrane segment at 34–54 threads the bilayer; it reads LGYPFSLLYTAAFTAILLLLW. At 55 to 62 the chain is on the cytoplasmic side; the sequence is RTLPRVQK. Residues 63-83 form a helical membrane-spanning segment; the sequence is VLVGVSSLVAACYFPFAQAYG. Residues 84 to 106 are Periplasmic-facing; it reads APNFNTLLALHSTNMEESTEILT. The helical transmembrane segment at 107 to 127 threads the bilayer; the sequence is IFPWYSYLVGLFIFALGVIAI. Topologically, residues 128 to 146 are cytoplasmic; the sequence is RRKKENEKARWNTFDSLCL. The chain crosses the membrane as a helical span at residues 147 to 167; the sequence is VFSVATFFVAPVQNLAWGGVF. The Periplasmic portion of the chain corresponds to 168 to 527; it reads KLKDTGYPVF…LGTDIFDPKP (360 aa).

This sequence belongs to the phosphoethanolamine transferase family.

It is found in the cell inner membrane. It functions in the pathway glycan metabolism; osmoregulated periplasmic glucan (OPG) biosynthesis. Catalyzes the addition of a phosphoethanolamine moiety to the osmoregulated periplasmic glucan (OPG) backbone. This is Phosphoethanolamine transferase OpgE (opgE) from Escherichia coli (strain K12).